The chain runs to 251 residues: Pyrroloquinoline-quinone synthase (251 aa).

This sequence belongs to the PqqC family.

It catalyses the reaction 6-(2-amino-2-carboxyethyl)-7,8-dioxo-1,2,3,4,7,8-hexahydroquinoline-2,4-dicarboxylate + 3 O2 = pyrroloquinoline quinone + 2 H2O2 + 2 H2O + H(+). Its pathway is cofactor biosynthesis; pyrroloquinoline quinone biosynthesis. Its function is as follows. Ring cyclization and eight-electron oxidation of 3a-(2-amino-2-carboxyethyl)-4,5-dioxo-4,5,6,7,8,9-hexahydroquinoline-7,9-dicarboxylic-acid to PQQ. This is Pyrroloquinoline-quinone synthase from Pseudomonas entomophila (strain L48).